The sequence spans 427 residues: UPF0229 protein KPN78578_11640 (427 aa).

Residues 72-109 (RNRVHPGNDHFVQNDRIERPQGGGGGGGSGQGQASADG) form a disordered region. Basic and acidic residues predominate over residues 77–90 (PGNDHFVQNDRIER). Gly residues predominate over residues 92 to 102 (QGGGGGGGSGQ).

It belongs to the UPF0229 family.

This is UPF0229 protein KPN78578_11640 from Klebsiella pneumoniae subsp. pneumoniae (strain ATCC 700721 / MGH 78578).